A 348-amino-acid chain; its full sequence is Erlin-1 (348 aa).

Topologically, residues 1–7 (MNMTQAR) are cytoplasmic. The chain crosses the membrane as a helical span at residues 8–28 (VLVAAVVGLVAVLLYASIHKI). The Lumenal segment spans residues 29–348 (EEGHLAVYYR…NVIQNKESTG (320 aa)). An N-linked (GlcNAc...) asparagine glycan is attached at Asn-108. At Lys-269 the chain carries N6-acetyllysine. Positions 325–348 (SSLPSKEALEPSGENVIQNKESTG) are disordered. Over residues 339–348 (NVIQNKESTG) the composition is skewed to polar residues.

The protein belongs to the band 7/mec-2 family. Forms a heteromeric complex with ERLIN2. In complex with ERLIN2, interacts with RNF170. Interacts with AMFR and SYVN1. In terms of processing, deubiquitinated by USP25; leading to stabilization. As to expression, expressed in heart, placenta, liver, kidney, pancreas, prostate, testis, ovary and small intestine.

It localises to the endoplasmic reticulum membrane. Functionally, component of the ERLIN1/ERLIN2 complex which mediates the endoplasmic reticulum-associated degradation (ERAD) of inositol 1,4,5-trisphosphate receptors (IP3Rs). Involved in regulation of cellular cholesterol homeostasis by regulation the SREBP signaling pathway. Binds cholesterol and may promote ER retention of the SCAP-SREBF complex. (Microbial infection) Required early in hepatitis C virus (HCV) infection to initiate RNA replication, and later in the infection to support infectious virus production. This Homo sapiens (Human) protein is Erlin-1.